Consider the following 419-residue polypeptide: UDP-N-acetylglucosamine 1-carboxyvinyltransferase 2 (419 aa).

22–23 contributes to the phosphoenolpyruvate binding site; sequence KN. Residue Arg-92 participates in UDP-N-acetyl-alpha-D-glucosamine binding. Cys-116 functions as the Proton donor in the catalytic mechanism. Position 116 is a 2-(S-cysteinyl)pyruvic acid O-phosphothioketal (Cys-116). UDP-N-acetyl-alpha-D-glucosamine-binding positions include 121 to 125, Asp-306, and Val-328; that span reads RPIDL.

It belongs to the EPSP synthase family. MurA subfamily.

It localises to the cytoplasm. It catalyses the reaction phosphoenolpyruvate + UDP-N-acetyl-alpha-D-glucosamine = UDP-N-acetyl-3-O-(1-carboxyvinyl)-alpha-D-glucosamine + phosphate. Its pathway is cell wall biogenesis; peptidoglycan biosynthesis. Cell wall formation. Adds enolpyruvyl to UDP-N-acetylglucosamine. The sequence is that of UDP-N-acetylglucosamine 1-carboxyvinyltransferase 2 from Carboxydothermus hydrogenoformans (strain ATCC BAA-161 / DSM 6008 / Z-2901).